We begin with the raw amino-acid sequence, 706 residues long: D-(-)-3-hydroxybutyrate oligomer hydrolase (706 aa).

The first 32 residues, 1-32 (MTTTSKNCLTLTSIAAAVAAVLVLSACGGGSA), serve as a signal peptide directing secretion. S311 serves as the catalytic Charge relay system.

It belongs to the D-(-)-3-hydroxybutyrate oligomer hydrolase family.

It localises to the secreted. The catalysed reaction is (3R)-hydroxybutanoate dimer + H2O = 2 (R)-3-hydroxybutanoate + H(+). It functions in the pathway lipid metabolism; butanoate metabolism. In terms of biological role, participates in the degradation of poly-3-hydroxybutyrate (PHB). It works downstream of poly(3-hydroxybutyrate) depolymerase, hydrolyzing D(-)-3-hydroxybutyrate oligomers of various length (3HB-oligomers) into 3HB-monomers. This is D-(-)-3-hydroxybutyrate oligomer hydrolase from Polaromonas sp. (strain JS666 / ATCC BAA-500).